The following is a 204-amino-acid chain: Large ribosomal subunit protein eL15y (204 aa).

It belongs to the eukaryotic ribosomal protein eL15 family.

The chain is Large ribosomal subunit protein eL15y (SB62) from Picea mariana (Black spruce).